The sequence spans 465 residues: Uronate isomerase (465 aa).

Belongs to the metallo-dependent hydrolases superfamily. Uronate isomerase family.

It catalyses the reaction D-glucuronate = D-fructuronate. The catalysed reaction is aldehydo-D-galacturonate = keto-D-tagaturonate. It participates in carbohydrate metabolism; pentose and glucuronate interconversion. In Streptococcus equi subsp. zooepidemicus (strain MGCS10565), this protein is Uronate isomerase.